The primary structure comprises 128 residues: Small ribosomal subunit protein uS9 (128 aa).

It belongs to the universal ribosomal protein uS9 family.

This Flavobacterium psychrophilum (strain ATCC 49511 / DSM 21280 / CIP 103535 / JIP02/86) protein is Small ribosomal subunit protein uS9.